A 217-amino-acid polypeptide reads, in one-letter code: Cytochrome b5 domain-containing protein 1 (217 aa).

The Cytochrome b5 heme-binding domain maps to 6-72 (PRFYTPREVS…NPKTGDVKTH (67 aa)). Heme contacts are provided by histidine 41 and histidine 72.

The protein belongs to the cytochrome b5 family.

It is found in the cytoplasm. Its subcellular location is the cytoskeleton. The protein localises to the cilium axoneme. Functionally, radial spoke stalk protein that binds heme under oxidizing conditions. Required for the coordinated beating of multiple cilia maybe by functioning in a redox signaling pathway. This Xenopus tropicalis (Western clawed frog) protein is Cytochrome b5 domain-containing protein 1 (cyb5d1).